The sequence spans 404 residues: Cytoplasmic tRNA 2-thiolation protein 2 (404 aa).

Belongs to the CTU2/NCS2 family.

The protein localises to the cytoplasm. Its pathway is tRNA modification; 5-methoxycarbonylmethyl-2-thiouridine-tRNA biosynthesis. Its function is as follows. Plays a central role in 2-thiolation of mcm(5)S(2)U at tRNA wobble positions of tRNA(Lys), tRNA(Glu) and tRNA(Gln). May act by forming a heterodimer with NCS6/CTU1 that ligates sulfur from thiocarboxylated URM1 onto the uridine of tRNAs at wobble position. The sequence is that of Cytoplasmic tRNA 2-thiolation protein 2 from Drosophila yakuba (Fruit fly).